The sequence spans 545 residues: CTP synthase (545 aa).

Positions 1–266 (MTHFIFVTGG…DDLICERFGY (266 aa)) are amidoligase domain. Ser-13 is a CTP binding site. Ser-13 serves as a coordination point for UTP. ATP contacts are provided by residues 14-19 (SLGKGI) and Asp-71. Mg(2+) contacts are provided by Asp-71 and Glu-140. CTP is bound by residues 147-149 (DIE), 187-192 (KTKPTQ), and Lys-223. Residues 187–192 (KTKPTQ) and Lys-223 contribute to the UTP site. 239–241 (KDA) is an ATP binding site. One can recognise a Glutamine amidotransferase type-1 domain in the interval 292 to 543 (RVAMVGKYVE…IDAAKKQHLK (252 aa)). Residue Gly-353 coordinates L-glutamine. The Nucleophile; for glutamine hydrolysis role is filled by Cys-380. Residues 381 to 384 (LGMQ), Glu-404, and Arg-471 each bind L-glutamine. Residues His-516 and Glu-518 contribute to the active site.

Belongs to the CTP synthase family. In terms of assembly, homotetramer.

The catalysed reaction is UTP + L-glutamine + ATP + H2O = CTP + L-glutamate + ADP + phosphate + 2 H(+). It catalyses the reaction L-glutamine + H2O = L-glutamate + NH4(+). It carries out the reaction UTP + NH4(+) + ATP = CTP + ADP + phosphate + 2 H(+). It participates in pyrimidine metabolism; CTP biosynthesis via de novo pathway; CTP from UDP: step 2/2. Allosterically activated by GTP, when glutamine is the substrate; GTP has no effect on the reaction when ammonia is the substrate. The allosteric effector GTP functions by stabilizing the protein conformation that binds the tetrahedral intermediate(s) formed during glutamine hydrolysis. Inhibited by the product CTP, via allosteric rather than competitive inhibition. In terms of biological role, catalyzes the ATP-dependent amination of UTP to CTP with either L-glutamine or ammonia as the source of nitrogen. Regulates intracellular CTP levels through interactions with the four ribonucleotide triphosphates. This chain is CTP synthase, found in Acinetobacter baylyi (strain ATCC 33305 / BD413 / ADP1).